The sequence spans 268 residues: Mediator of RNA polymerase II transcription subunit 8 (268 aa).

A coiled-coil region spans residues 1–28 (MQREEKQLEASLDALLSQVADLKNSLGS). At Ser82 the chain carries Phosphoserine. A coiled-coil region spans residues 133–163 (ADAAQKQIQSLNKMCSNLLEKISKEERESES). The segment at 142–151 (SLNKMCSNLL) is interaction with the Elongin BC complex. Disordered regions lie at residues 156–176 (KEERESESGGLRPNKQTFNPT) and 193–268 (NWRP…PYQR). A compositionally biased stretch (gly residues) spans 200 to 209 (SGPGQAGQPG). Polar residues predominate over residues 218 to 235 (SGLQQVQMAGAPSQQQPM).

The protein belongs to the Mediator complex subunit 8 family. Component of the Mediator complex, which is composed of MED1, MED4, MED6, MED7, MED8, MED9, MED10, MED11, MED12, MED13, MED13L, MED14, MED15, MED16, MED17, MED18, MED19, MED20, MED21, MED22, MED23, MED24, MED25, MED26, MED27, MED29, MED30, MED31, CCNC, CDK8 and CDC2L6/CDK11. The MED12, MED13, CCNC and CDK8 subunits form a distinct module termed the CDK8 module. Mediator containing the CDK8 module is less active than Mediator lacking this module in supporting transcriptional activation. Individual preparations of the Mediator complex lacking one or more distinct subunits have been variously termed ARC, CRSP, DRIP, PC2, SMCC and TRAP. May be part of a multisubunit E3 ubiquitin-protein ligase complex with the elongin BC complex (ELOB and ELOC), CUL2 and RBX1.

The protein resides in the nucleus. It participates in protein modification; protein ubiquitination. Component of the Mediator complex, a coactivator involved in the regulated transcription of nearly all RNA polymerase II-dependent genes. Mediator functions as a bridge to convey information from gene-specific regulatory proteins to the basal RNA polymerase II transcription machinery. Mediator is recruited to promoters by direct interactions with regulatory proteins and serves as a scaffold for the assembly of a functional preinitiation complex with RNA polymerase II and the general transcription factors. May play a role as a target recruitment subunit in E3 ubiquitin-protein ligase complexes and thus in ubiquitination and subsequent proteasomal degradation of target proteins. This Homo sapiens (Human) protein is Mediator of RNA polymerase II transcription subunit 8 (MED8).